The following is a 303-amino-acid chain: Quinolinate synthase (303 aa).

Positions 24 and 41 each coordinate iminosuccinate. Cys86 serves as a coordination point for [4Fe-4S] cluster. Iminosuccinate-binding positions include 112 to 114 (YIN) and Ser129. Residue Cys172 coordinates [4Fe-4S] cluster. Iminosuccinate is bound by residues 198–200 (HPE) and Thr215. Cys260 lines the [4Fe-4S] cluster pocket.

Belongs to the quinolinate synthase family. Type 2 subfamily. The cofactor is [4Fe-4S] cluster.

Its subcellular location is the cytoplasm. The catalysed reaction is iminosuccinate + dihydroxyacetone phosphate = quinolinate + phosphate + 2 H2O + H(+). The protein operates within cofactor biosynthesis; NAD(+) biosynthesis; quinolinate from iminoaspartate: step 1/1. In terms of biological role, catalyzes the condensation of iminoaspartate with dihydroxyacetone phosphate to form quinolinate. The polypeptide is Quinolinate synthase (Caldicellulosiruptor saccharolyticus (strain ATCC 43494 / DSM 8903 / Tp8T 6331)).